The primary structure comprises 353 residues: Photosystem II D2 protein (353 aa).

N-acetylthreonine is present on Thr-2. The residue at position 2 (Thr-2) is a Phosphothreonine. A helical transmembrane segment spans residues 41–61; it reads CAYFALGGWFTGTTFVTSWYT. Residue His-118 coordinates chlorophyll a. Residues 125–141 form a helical membrane-spanning segment; it reads GFMLRQFELARSVQLRP. Residues Gln-130 and Asn-143 each contribute to the pheophytin a site. A helical transmembrane segment spans residues 153 to 166; sequence VFVSVFLIYPLGQS. Residue His-198 participates in chlorophyll a binding. Residues 208 to 228 form a helical membrane-spanning segment; sequence AALLCAIHGATVENTLFEDGD. Positions 215 and 262 each coordinate a plastoquinone. Residue His-215 coordinates Fe cation. Fe cation is bound at residue His-269. A helical transmembrane segment spans residues 279–295; it reads GLWMSAIGVVGLALNLR.

It belongs to the reaction center PufL/M/PsbA/D family. PSII is composed of 1 copy each of membrane proteins PsbA, PsbB, PsbC, PsbD, PsbE, PsbF, PsbH, PsbI, PsbJ, PsbK, PsbL, PsbM, PsbT, PsbX, PsbY, PsbZ, Psb30/Ycf12, at least 3 peripheral proteins of the oxygen-evolving complex and a large number of cofactors. It forms dimeric complexes. The D1/D2 heterodimer binds P680, chlorophylls that are the primary electron donor of PSII, and subsequent electron acceptors. It shares a non-heme iron and each subunit binds pheophytin, quinone, additional chlorophylls, carotenoids and lipids. There is also a Cl(-1) ion associated with D1 and D2, which is required for oxygen evolution. The PSII complex binds additional chlorophylls, carotenoids and specific lipids. is required as a cofactor.

Its subcellular location is the plastid. The protein localises to the chloroplast thylakoid membrane. The enzyme catalyses 2 a plastoquinone + 4 hnu + 2 H2O = 2 a plastoquinol + O2. Photosystem II (PSII) is a light-driven water:plastoquinone oxidoreductase that uses light energy to abstract electrons from H(2)O, generating O(2) and a proton gradient subsequently used for ATP formation. It consists of a core antenna complex that captures photons, and an electron transfer chain that converts photonic excitation into a charge separation. The D1/D2 (PsbA/PsbD) reaction center heterodimer binds P680, the primary electron donor of PSII as well as several subsequent electron acceptors. D2 is needed for assembly of a stable PSII complex. The protein is Photosystem II D2 protein of Cryptomeria japonica (Japanese cedar).